The sequence spans 490 residues: Cysteine protease 1 (490 aa).

Positions 1 to 31 (MAGGGGKSVAAALAMACFLLILAAFAPPAAA) are cleaved as a signal peptide. The propeptide at 32 to 154 (APPDIMSIIR…EAYRHDGVEA (123 aa)) is activation peptide. Intrachain disulfides connect Cys-177-Cys-220, Cys-211-Cys-253, Cys-311-Cys-364, Cys-395-Cys-407, and Cys-401-Cys-422. The active site involves Cys-180. Residues His-317 and Asn-339 contribute to the active site. The N-linked (GlcNAc...) asparagine glycan is linked to Asn-356. Residues 379 to 490 (NPKPSPPSPA…FVVLNREDLV (112 aa)) constitute a propeptide, removed in mature form.

This sequence belongs to the peptidase C1 family. As to expression, highly expressed in the tapetum and developing pollen of the anther locules. Weakly expressed in root and germinating seed, hardly in the anther-less-flower and not detected in leaf.

Its function is as follows. Cysteine protease that may play a role in pollen development. May be regulated by the transcription factor UDT1 in developing anthers and play a role in tapetum development. Positively regulated by the transcription factor TDR in developing anthers and may play a role in tapetum programmed cell death (PCD). This Oryza sativa subsp. japonica (Rice) protein is Cysteine protease 1 (CP1).